Here is a 103-residue protein sequence, read N- to C-terminus: Pyrimidine/purine nucleoside phosphorylase (103 aa).

It belongs to the nucleoside phosphorylase PpnP family.

The catalysed reaction is a purine D-ribonucleoside + phosphate = a purine nucleobase + alpha-D-ribose 1-phosphate. It catalyses the reaction adenosine + phosphate = alpha-D-ribose 1-phosphate + adenine. The enzyme catalyses cytidine + phosphate = cytosine + alpha-D-ribose 1-phosphate. It carries out the reaction guanosine + phosphate = alpha-D-ribose 1-phosphate + guanine. The catalysed reaction is inosine + phosphate = alpha-D-ribose 1-phosphate + hypoxanthine. It catalyses the reaction thymidine + phosphate = 2-deoxy-alpha-D-ribose 1-phosphate + thymine. The enzyme catalyses uridine + phosphate = alpha-D-ribose 1-phosphate + uracil. It carries out the reaction xanthosine + phosphate = alpha-D-ribose 1-phosphate + xanthine. Functionally, catalyzes the phosphorolysis of diverse nucleosides, yielding D-ribose 1-phosphate and the respective free bases. Can use uridine, adenosine, guanosine, cytidine, thymidine, inosine and xanthosine as substrates. Also catalyzes the reverse reactions. The protein is Pyrimidine/purine nucleoside phosphorylase of Shewanella putrefaciens (strain CN-32 / ATCC BAA-453).